Consider the following 492-residue polypeptide: Ketol-acid reductoisomerase (NADP(+)) (492 aa).

Residues 14–208 enclose the KARI N-terminal Rossmann domain; it reads LDQLGRCRFM…GGHKAGVLES (195 aa). Residues 45-48, R68, R76, S78, and 108-110 each bind NADP(+); these read CGAQ and DKQ. Residue H132 is part of the active site. G158 is a binding site for NADP(+). 2 consecutive KARI C-terminal knotted domains span residues 209 to 344 and 345 to 485; these read SFVA…NAPK and YDGK…MTDM. Residues D217, E221, E389, and E393 each coordinate Mg(2+). Residue S414 coordinates substrate.

The protein belongs to the ketol-acid reductoisomerase family. Mg(2+) serves as cofactor.

The catalysed reaction is (2R)-2,3-dihydroxy-3-methylbutanoate + NADP(+) = (2S)-2-acetolactate + NADPH + H(+). It catalyses the reaction (2R,3R)-2,3-dihydroxy-3-methylpentanoate + NADP(+) = (S)-2-ethyl-2-hydroxy-3-oxobutanoate + NADPH + H(+). The protein operates within amino-acid biosynthesis; L-isoleucine biosynthesis; L-isoleucine from 2-oxobutanoate: step 2/4. It functions in the pathway amino-acid biosynthesis; L-valine biosynthesis; L-valine from pyruvate: step 2/4. Its function is as follows. Involved in the biosynthesis of branched-chain amino acids (BCAA). Catalyzes an alkyl-migration followed by a ketol-acid reduction of (S)-2-acetolactate (S2AL) to yield (R)-2,3-dihydroxy-isovalerate. In the isomerase reaction, S2AL is rearranged via a Mg-dependent methyl migration to produce 3-hydroxy-3-methyl-2-ketobutyrate (HMKB). In the reductase reaction, this 2-ketoacid undergoes a metal-dependent reduction by NADPH to yield (R)-2,3-dihydroxy-isovalerate. The chain is Ketol-acid reductoisomerase (NADP(+)) from Haemophilus influenzae (strain PittEE).